Here is a 419-residue protein sequence, read N- to C-terminus: Erythromycin esterase type II (419 aa).

Functionally, this enzyme confers resistance to erythromycin through inactivation by hydrolyzing the lactone ring of the antibiotic. The sequence is that of Erythromycin esterase type II (ereB) from Escherichia coli.